The following is a 796-amino-acid chain: Probable phosphoketolase (796 aa).

The protein belongs to the XFP family. Requires thiamine diphosphate as cofactor.

This chain is Probable phosphoketolase, found in Streptomyces coelicolor (strain ATCC BAA-471 / A3(2) / M145).